The chain runs to 350 residues: Uroporphyrinogen decarboxylase (350 aa).

Substrate is bound by residues 23-27 (RQAGR), Asp-72, Tyr-149, Ser-204, and His-318.

Belongs to the uroporphyrinogen decarboxylase family. In terms of assembly, homodimer.

The protein resides in the cytoplasm. The enzyme catalyses uroporphyrinogen III + 4 H(+) = coproporphyrinogen III + 4 CO2. The protein operates within porphyrin-containing compound metabolism; protoporphyrin-IX biosynthesis; coproporphyrinogen-III from 5-aminolevulinate: step 4/4. In terms of biological role, catalyzes the decarboxylation of four acetate groups of uroporphyrinogen-III to yield coproporphyrinogen-III. In Carboxydothermus hydrogenoformans (strain ATCC BAA-161 / DSM 6008 / Z-2901), this protein is Uroporphyrinogen decarboxylase.